Reading from the N-terminus, the 277-residue chain is uncharacterized protein (277 aa).

The tract at residues 1-20 (MVTTSPPPTLTNSVQPHPTT) is disordered.

This is an uncharacterized protein from Acidianus convivator (ATV).